The following is a 156-amino-acid chain: Small ribosomal subunit protein uS7 (156 aa).

The protein belongs to the universal ribosomal protein uS7 family. Part of the 30S ribosomal subunit. Contacts proteins S9 and S11.

In terms of biological role, one of the primary rRNA binding proteins, it binds directly to 16S rRNA where it nucleates assembly of the head domain of the 30S subunit. Is located at the subunit interface close to the decoding center, probably blocks exit of the E-site tRNA. The protein is Small ribosomal subunit protein uS7 of Brucella abortus (strain S19).